The sequence spans 436 residues: Xylose isomerase (436 aa).

Catalysis depends on residues His-100 and Asp-103. 7 residues coordinate Mg(2+): Glu-231, Glu-267, His-270, Asp-295, Asp-306, Asp-308, and Asp-338.

It belongs to the xylose isomerase family. As to quaternary structure, homotetramer. Requires Mg(2+) as cofactor.

It localises to the cytoplasm. The catalysed reaction is alpha-D-xylose = alpha-D-xylulofuranose. This chain is Xylose isomerase, found in Chelativorans sp. (strain BNC1).